The primary structure comprises 293 residues: GDT1-like protein 3 (293 aa).

An N-terminal signal peptide occupies residues 1 to 25 (MGLISNPTRLILVATIFFLVSSISG). 6 helical membrane passes run 89-109 (FSMI…ALMA), 115-135 (ATVL…STGL), 148-168 (TNSA…YIAW), 200-220 (LFSR…FLAE), 238-258 (AIGV…LAVV), and 272-292 (VATV…FYPP).

It belongs to the GDT1 family.

It localises to the membrane. The sequence is that of GDT1-like protein 3 from Arabidopsis thaliana (Mouse-ear cress).